A 331-amino-acid polypeptide reads, in one-letter code: UPF0194 membrane protein YbhG (331 aa).

An N-terminal signal peptide occupies residues 1-19 (MKKPVVIGLVIAAIVAVIA). Residues 140 to 209 (RTISANDLEN…DLQDTTLIAP (70 aa)) adopt a coiled-coil conformation.

It belongs to the UPF0194 family.

It localises to the periplasm. This Salmonella typhi protein is UPF0194 membrane protein YbhG (ybhG).